Consider the following 339-residue polypeptide: Methionyl-tRNA formyltransferase (339 aa).

110–113 (SLLP) is a (6S)-5,6,7,8-tetrahydrofolate binding site.

Belongs to the Fmt family.

The catalysed reaction is L-methionyl-tRNA(fMet) + (6R)-10-formyltetrahydrofolate = N-formyl-L-methionyl-tRNA(fMet) + (6S)-5,6,7,8-tetrahydrofolate + H(+). In terms of biological role, attaches a formyl group to the free amino group of methionyl-tRNA(fMet). The formyl group appears to play a dual role in the initiator identity of N-formylmethionyl-tRNA by promoting its recognition by IF2 and preventing the misappropriation of this tRNA by the elongation apparatus. The sequence is that of Methionyl-tRNA formyltransferase from Prochlorococcus marinus (strain SARG / CCMP1375 / SS120).